We begin with the raw amino-acid sequence, 61 residues long: UPF0181 protein Ent638_2380 (61 aa).

Belongs to the UPF0181 family.

The protein is UPF0181 protein Ent638_2380 of Enterobacter sp. (strain 638).